Consider the following 364-residue polypeptide: Aminomethyltransferase (364 aa).

It belongs to the GcvT family. In terms of assembly, the glycine cleavage system is composed of four proteins: P, T, L and H.

The catalysed reaction is N(6)-[(R)-S(8)-aminomethyldihydrolipoyl]-L-lysyl-[protein] + (6S)-5,6,7,8-tetrahydrofolate = N(6)-[(R)-dihydrolipoyl]-L-lysyl-[protein] + (6R)-5,10-methylene-5,6,7,8-tetrahydrofolate + NH4(+). In terms of biological role, the glycine cleavage system catalyzes the degradation of glycine. This chain is Aminomethyltransferase, found in Shewanella sp. (strain ANA-3).